The sequence spans 388 residues: Succinate--CoA ligase [ADP-forming] subunit beta (388 aa).

In terms of domain architecture, ATP-grasp spans 9–244; the sequence is KGVLSSFGVT…PDEYAAEELE (236 aa). ATP-binding positions include Lys46, 53–55, Glu99, Val102, and Glu107; that span reads GRG. Mg(2+)-binding residues include Asn199 and Asp213. Residues Asn264 and 320-322 each bind substrate; that span reads GIM.

This sequence belongs to the succinate/malate CoA ligase beta subunit family. Heterotetramer of two alpha and two beta subunits. It depends on Mg(2+) as a cofactor.

It carries out the reaction succinate + ATP + CoA = succinyl-CoA + ADP + phosphate. It catalyses the reaction GTP + succinate + CoA = succinyl-CoA + GDP + phosphate. The protein operates within carbohydrate metabolism; tricarboxylic acid cycle; succinate from succinyl-CoA (ligase route): step 1/1. Its function is as follows. Succinyl-CoA synthetase functions in the citric acid cycle (TCA), coupling the hydrolysis of succinyl-CoA to the synthesis of either ATP or GTP and thus represents the only step of substrate-level phosphorylation in the TCA. The beta subunit provides nucleotide specificity of the enzyme and binds the substrate succinate, while the binding sites for coenzyme A and phosphate are found in the alpha subunit. The protein is Succinate--CoA ligase [ADP-forming] subunit beta of Anaplasma marginale (strain St. Maries).